A 361-amino-acid chain; its full sequence is Probable pectinesterase 50 (361 aa).

The signal sequence occupies residues 1-22; sequence MGYISMSVVAFLVVFASPVVLA. Q174 serves as a coordination point for substrate. D197 functions as the Proton donor in the catalytic mechanism. The Nucleophile role is filled by D218. Substrate-binding residues include R275 and W277.

This sequence belongs to the pectinesterase family. Expressed in flower buds.

It is found in the secreted. It localises to the cell wall. It catalyses the reaction [(1-&gt;4)-alpha-D-galacturonosyl methyl ester](n) + n H2O = [(1-&gt;4)-alpha-D-galacturonosyl](n) + n methanol + n H(+). It participates in glycan metabolism; pectin degradation; 2-dehydro-3-deoxy-D-gluconate from pectin: step 1/5. Acts in the modification of cell walls via demethylesterification of cell wall pectin. The sequence is that of Probable pectinesterase 50 (PME50) from Arabidopsis thaliana (Mouse-ear cress).